Reading from the N-terminus, the 636-residue chain is Rik1-associated factor 2 (636 aa).

As to quaternary structure, component of the Clr4 methyltransferase complex (ClrC) composed of at least clr4, rik1, pcu4, rbx1, raf1 and raf2. The cullin pcu4, rik1, raf1, raf2 and the ring-box protein rbx1 are components of an E3 ubiquitin ligase, whose activity is essential for heterochromatin assembly. Interacts with pcu4.

The protein localises to the cytoplasm. Its subcellular location is the mitochondrion. It is found in the nucleus. The protein resides in the chromosome. In terms of biological role, component of the Clr4 methyltransferase complex (ClrC) which contributes to the establishment of heterochromatin by specifically methylating histone H3 to form H3K9me. ClrC preferentially ubiquitylates H3K14 and ClrC-mediated H3 ubiquitination promotes clr4 methyltransferase activity for the methylation of H3K9. H3K9me represents a specific tag for epigenetic transcriptional repression by recruiting swi6/HP1 to methylated histones which leads to transcriptional silencing within centromeric heterochromatin, telomeric regions and at the silent mating-type loci. Has a role in both mitotic and meiotic chromosome segregation. The chain is Rik1-associated factor 2 (raf2) from Schizosaccharomyces pombe (strain 972 / ATCC 24843) (Fission yeast).